Consider the following 840-residue polypeptide: Translation initiation factor IF-2 (840 aa).

Positions Arg-95–Arg-143 are enriched in basic and acidic residues. Disordered stretches follow at residues Arg-95 to Gly-155 and Pro-173 to Pro-256. The segment covering Ala-144–Gly-155 has biased composition (low complexity). Composition is skewed to basic and acidic residues over residues Ala-175–Asp-191 and Ser-223–Arg-232. The span at Arg-233–Gln-247 shows a compositional bias: basic residues. Residues Thr-340–Lys-509 enclose the tr-type G domain. Residues Gly-349–Thr-356 form a G1 region. Gly-349–Thr-356 provides a ligand contact to GTP. A G2 region spans residues Gly-374–His-378. The tract at residues Asp-395 to Gly-398 is G3. Residues Asp-395–His-399 and Asn-449–Asp-452 contribute to the GTP site. The interval Asn-449–Asp-452 is G4. The interval Ser-485–Lys-487 is G5.

Belongs to the TRAFAC class translation factor GTPase superfamily. Classic translation factor GTPase family. IF-2 subfamily.

The protein localises to the cytoplasm. One of the essential components for the initiation of protein synthesis. Protects formylmethionyl-tRNA from spontaneous hydrolysis and promotes its binding to the 30S ribosomal subunits. Also involved in the hydrolysis of GTP during the formation of the 70S ribosomal complex. The polypeptide is Translation initiation factor IF-2 (Pseudomonas aeruginosa (strain ATCC 15692 / DSM 22644 / CIP 104116 / JCM 14847 / LMG 12228 / 1C / PRS 101 / PAO1)).